An 886-amino-acid chain; its full sequence is Extended synaptotagmin-3 (886 aa).

The segment at 1 to 21 is disordered; sequence MRAEEPCAPGAPSALGAQRTP. At 1–29 the chain is on the cytoplasmic side; sequence MRAEEPCAPGAPSALGAQRTPGPELRLSS. The next 2 membrane-spanning stretches (helical) occupy residues 30–50 and 51–71; these read QLLP…GPVY and LAGY…LWMW. The Cytoplasmic portion of the chain corresponds to 72–886; sequence WRRNRRGKLG…ELTPNGQPRS (815 aa). One can recognise an SMP-LTD domain in the interval 114–291; the sequence is DVERVEWANK…LPNRVTVPVK (178 aa). C2 domains follow at residues 291–408 and 426–566; these read KKGL…DEWF and SLLT…QLDH. Residues Lys-321, Asp-322, Asp-332, Asp-379, Glu-380, Asp-381, Asp-383, Asp-385, and Asp-386 each coordinate Ca(2+). The interval 613–673 is disordered; the sequence is QGPKAQPQEE…PEPKGKDSAK (61 aa). The span at 642–659 shows a compositional bias: low complexity; it reads RSTTTTTSATTVATEPTS. The span at 664–673 shows a compositional bias: basic and acidic residues; it reads PEPKGKDSAK. The region spanning 754 to 876 is the C2 3 domain; the sequence is QLGEIQLTVR…DLIKGFSQWY (123 aa). Positions 801–808 are required for phosphatidylinositol 4,5-bisphosphate-dependent location at the cell membrane; the sequence is RKWACRKK.

The protein belongs to the extended synaptotagmin family. Interacts with ESYT1 and ESYT2. In terms of tissue distribution, widely expressed with high level in cerebellum and skin.

The protein resides in the cell membrane. The protein localises to the endoplasmic reticulum membrane. Functionally, binds glycerophospholipids in a barrel-like domain and may play a role in cellular lipid transport. Tethers the endoplasmic reticulum to the cell membrane and promotes the formation of appositions between the endoplasmic reticulum and the cell membrane. This chain is Extended synaptotagmin-3, found in Homo sapiens (Human).